The following is a 265-amino-acid chain: Non-seed lectin (265 aa).

Residues 1–21 (MALYRTKELVSLVSIMFVLLA) constitute a signal peptide (or 23). Residues Asn59 and Asn127 are each glycosylated (N-linked (GlcNAc...) asparagine).

The protein belongs to the leguminous lectin family. In terms of assembly, monomer. In terms of tissue distribution, most highly expressed in the epidermal layer of developing shoot tips.

The chain is Non-seed lectin from Pisum sativum (Garden pea).